The following is a 317-amino-acid chain: NAD kinase (317 aa).

Catalysis depends on Asp-82, which acts as the Proton acceptor. NAD(+) contacts are provided by residues 82-83, Arg-87, 157-158, Asp-187, and 198-203; these read DG, NE, and TAYAFS.

This sequence belongs to the NAD kinase family. Requires a divalent metal cation as cofactor.

It localises to the cytoplasm. It carries out the reaction NAD(+) + ATP = ADP + NADP(+) + H(+). Functionally, involved in the regulation of the intracellular balance of NAD and NADP, and is a key enzyme in the biosynthesis of NADP. Catalyzes specifically the phosphorylation on 2'-hydroxyl of the adenosine moiety of NAD to yield NADP. The sequence is that of NAD kinase from Corynebacterium diphtheriae (strain ATCC 700971 / NCTC 13129 / Biotype gravis).